The chain runs to 354 residues: tRNA N6-adenosine threonylcarbamoyltransferase (354 aa).

His-115 and His-119 together coordinate Fe cation. Residues 138-142 (LVSGG), Asp-171, Gly-184, and Asn-285 contribute to the substrate site. Asp-313 serves as a coordination point for Fe cation.

The protein belongs to the KAE1 / TsaD family. The cofactor is Fe(2+).

The protein resides in the cytoplasm. The enzyme catalyses L-threonylcarbamoyladenylate + adenosine(37) in tRNA = N(6)-L-threonylcarbamoyladenosine(37) in tRNA + AMP + H(+). Required for the formation of a threonylcarbamoyl group on adenosine at position 37 (t(6)A37) in tRNAs that read codons beginning with adenine. Is involved in the transfer of the threonylcarbamoyl moiety of threonylcarbamoyl-AMP (TC-AMP) to the N6 group of A37, together with TsaE and TsaB. TsaD likely plays a direct catalytic role in this reaction. In Albidiferax ferrireducens (strain ATCC BAA-621 / DSM 15236 / T118) (Rhodoferax ferrireducens), this protein is tRNA N6-adenosine threonylcarbamoyltransferase.